A 718-amino-acid chain; its full sequence is Phenylalanine--tRNA ligase beta subunit (718 aa).

Residues 40 to 153 form the tRNA-binding domain; it reads FLNVSKIKFG…KADLKQDPID (114 aa). A B5 domain is found at 387–462; it reads DKKESFNFVW…RFYGYENLVF (76 aa). Mg(2+)-binding residues include Asp440, Asp446, Glu449, and Glu450.

It belongs to the phenylalanyl-tRNA synthetase beta subunit family. Type 1 subfamily. In terms of assembly, tetramer of two alpha and two beta subunits. Mg(2+) is required as a cofactor.

Its subcellular location is the cytoplasm. It catalyses the reaction tRNA(Phe) + L-phenylalanine + ATP = L-phenylalanyl-tRNA(Phe) + AMP + diphosphate + H(+). The protein is Phenylalanine--tRNA ligase beta subunit of Mycoplasmopsis pulmonis (strain UAB CTIP) (Mycoplasma pulmonis).